Consider the following 331-residue polypeptide: Glyceraldehyde-3-phosphate dehydrogenase 2 (331 aa).

NAD(+)-binding positions include 11–12, aspartate 33, and arginine 78; that span reads RI. Residues 148–150, threonine 179, 208–209, and arginine 231 each bind D-glyceraldehyde 3-phosphate; these read SCT and TG. Residue cysteine 149 is the Nucleophile of the active site. Asparagine 313 contributes to the NAD(+) binding site.

The protein belongs to the glyceraldehyde-3-phosphate dehydrogenase family. As to quaternary structure, homotetramer.

It is found in the cytoplasm. It carries out the reaction D-glyceraldehyde 3-phosphate + phosphate + NAD(+) = (2R)-3-phospho-glyceroyl phosphate + NADH + H(+). The protein operates within carbohydrate degradation; glycolysis; pyruvate from D-glyceraldehyde 3-phosphate: step 1/5. The polypeptide is Glyceraldehyde-3-phosphate dehydrogenase 2 (GAP2) (Kluyveromyces marxianus (Yeast)).